The following is an 81-amino-acid chain: Small ribosomal subunit protein bS20 (81 aa).

The segment covering 1 to 11 has biased composition (basic residues); the sequence is MPNIKSQKKRV. A disordered region spans residues 1–20; that stretch reads MPNIKSQKKRVLTNEKSRAS.

It belongs to the bacterial ribosomal protein bS20 family.

Functionally, binds directly to 16S ribosomal RNA. This Mesoplasma florum (strain ATCC 33453 / NBRC 100688 / NCTC 11704 / L1) (Acholeplasma florum) protein is Small ribosomal subunit protein bS20.